Consider the following 290-residue polypeptide: Nucleotide-binding protein BAV3158 (290 aa).

Gly9–Ser16 is an ATP binding site. Asp58 to Ser61 lines the GTP pocket.

Belongs to the RapZ-like family.

Its function is as follows. Displays ATPase and GTPase activities. The polypeptide is Nucleotide-binding protein BAV3158 (Bordetella avium (strain 197N)).